The sequence spans 637 residues: Threonine--tRNA ligase (637 aa).

The 61-residue stretch at 1–61 (MIKITLKDGK…NEDSTLEILT (61 aa)) folds into the TGS domain. A catalytic region spans residues 242-532 (DHRKLGKELG…LTEHYAGAFP (291 aa)). Residues C333, H384, and H509 each coordinate Zn(2+).

It belongs to the class-II aminoacyl-tRNA synthetase family. In terms of assembly, homodimer. The cofactor is Zn(2+).

It is found in the cytoplasm. The enzyme catalyses tRNA(Thr) + L-threonine + ATP = L-threonyl-tRNA(Thr) + AMP + diphosphate + H(+). Its function is as follows. Catalyzes the attachment of threonine to tRNA(Thr) in a two-step reaction: L-threonine is first activated by ATP to form Thr-AMP and then transferred to the acceptor end of tRNA(Thr). Also edits incorrectly charged L-seryl-tRNA(Thr). The polypeptide is Threonine--tRNA ligase (Clostridium novyi (strain NT)).